The primary structure comprises 240 residues: MADS-box transcription factor 27 (240 aa).

Positions 1–61 (MGRGKIVIRR…GRLYEYSSTS (61 aa)) constitute an MADS-box domain. Residues 86–176 (LKFWQREAAS…YKKISLIRQE (91 aa)) form the K-box domain. The span at 220–231 (LPQHSDAEQSTA) shows a compositional bias: polar residues. The tract at residues 220 to 240 (LPQHSDAEQSTAPKLGLQLNP) is disordered.

In terms of tissue distribution, ubiquitous.

The protein localises to the nucleus. Its function is as follows. Probable transcription factor. This is MADS-box transcription factor 27 (MADS27) from Oryza sativa subsp. japonica (Rice).